Here is a 486-residue protein sequence, read N- to C-terminus: Arginine deiminase (486 aa).

C476 acts as the Amidino-cysteine intermediate in catalysis.

This sequence belongs to the arginine deiminase family.

The protein resides in the cytoplasm. The catalysed reaction is L-arginine + H2O = L-citrulline + NH4(+). It functions in the pathway amino-acid degradation; L-arginine degradation via ADI pathway; carbamoyl phosphate from L-arginine: step 1/2. Involved in the arginine deiminase pathway of fermentative arginine utilization. In Halobacterium salinarum (strain ATCC 29341 / DSM 671 / R1), this protein is Arginine deiminase (arcA).